The chain runs to 111 residues: Large ribosomal subunit protein uL22 (111 aa).

The protein belongs to the universal ribosomal protein uL22 family. In terms of assembly, part of the 50S ribosomal subunit.

Functionally, this protein binds specifically to 23S rRNA; its binding is stimulated by other ribosomal proteins, e.g. L4, L17, and L20. It is important during the early stages of 50S assembly. It makes multiple contacts with different domains of the 23S rRNA in the assembled 50S subunit and ribosome. In terms of biological role, the globular domain of the protein is located near the polypeptide exit tunnel on the outside of the subunit, while an extended beta-hairpin is found that lines the wall of the exit tunnel in the center of the 70S ribosome. In Chlamydia caviae (strain ATCC VR-813 / DSM 19441 / 03DC25 / GPIC) (Chlamydophila caviae), this protein is Large ribosomal subunit protein uL22.